Consider the following 243-residue polypeptide: MTDYGEEQRNELEALESIYPDSFTVLSENPPSFTITVTSEAGENDETVQTTLKFTYSEKYPDEAPLYEIFSQENLEDNDVSDILKLLALQAEENLGMVMIFTLVTAVQEKLNEIVDQIKTRREEEKKQKEKEAEEAEKQLFHGTPVTIENFLNWKAKFDAELLEIKKKRMKEEEQAGKNKLSGKQLFETDHNLDTSDIQFLEDAGNNVEVDESLFQEMDDLELEDDEDDPDYNPADPESDSAD.

N-acetylthreonine is present on Thr2. The region spanning 10–114 (NELEALESIY…TAVQEKLNEI (105 aa)) is the RWD domain. The interaction with DRG2 stretch occupies residues 142-197 (HGTPVTIENFLNWKAKFDAELLEIKKKRMKEEEQAGKNKLSGKQLFETDHNLDTSD). Residue Thr144 is modified to Phosphothreonine. The interval 198-243 (IQFLEDAGNNVEVDESLFQEMDDLELEDDEDDPDYNPADPESDSAD) is disordered. The span at 209 to 243 (EVDESLFQEMDDLELEDDEDDPDYNPADPESDSAD) shows a compositional bias: acidic residues.

The protein belongs to the RWDD1/GIR2 family. In terms of assembly, interacts with DRG2. Interacts with androgen receptor.

Protects DRG2 from proteolytic degradation. In Homo sapiens (Human), this protein is RWD domain-containing protein 1 (RWDD1).